The sequence spans 289 residues: Pantothenate synthetase (289 aa).

ATP is bound at residue Met33–His40. The active-site Proton donor is His40. Gln70 is a binding site for (R)-pantoate. Gln70 lines the beta-alanine pocket. ATP is bound at residue Gly157–Asp160. Gln163 contributes to the (R)-pantoate binding site. Residues Val186 and Leu194–Arg197 contribute to the ATP site.

The protein belongs to the pantothenate synthetase family. In terms of assembly, homodimer.

Its subcellular location is the cytoplasm. It catalyses the reaction (R)-pantoate + beta-alanine + ATP = (R)-pantothenate + AMP + diphosphate + H(+). It participates in cofactor biosynthesis; (R)-pantothenate biosynthesis; (R)-pantothenate from (R)-pantoate and beta-alanine: step 1/1. Catalyzes the condensation of pantoate with beta-alanine in an ATP-dependent reaction via a pantoyl-adenylate intermediate. The protein is Pantothenate synthetase of Anaeromyxobacter dehalogenans (strain 2CP-C).